Consider the following 514-residue polypeptide: Probable E3 ubiquitin-protein ligase ARI10 (514 aa).

The segment covering Met-1–Asn-18 has biased composition (acidic residues). The interval Met-1–Ser-26 is disordered. The tract at residues Val-117 to Val-322 is TRIAD supradomain. The Zn(2+) site is built by Cys-121, Cys-124, Cys-138, His-140, Cys-143, Cys-146, Cys-166, Cys-171, Cys-210, Cys-215, Cys-231, Cys-233, Cys-238, Cys-241, His-246, Cys-251, Cys-278, and Cys-281. The segment at Cys-121–Cys-171 adopts an RING-type 1 zinc-finger fold. Residues Asp-190–Cys-251 form an IBR-type zinc finger. An RING-type 2; atypical zinc finger spans residues Cys-278 to Cys-308. The active site involves Cys-291. Zn(2+) is bound by residues Cys-296, Cys-300, Cys-305, Cys-308, His-315, and Cys-318.

It belongs to the RBR family. Ariadne subfamily. Zn(2+) is required as a cofactor.

The enzyme catalyses [E2 ubiquitin-conjugating enzyme]-S-ubiquitinyl-L-cysteine + [acceptor protein]-L-lysine = [E2 ubiquitin-conjugating enzyme]-L-cysteine + [acceptor protein]-N(6)-ubiquitinyl-L-lysine.. The protein operates within protein modification; protein ubiquitination. In terms of biological role, might act as an E3 ubiquitin-protein ligase, or as part of E3 complex, which accepts ubiquitin from specific E2 ubiquitin-conjugating enzymes and then transfers it to substrates. This Arabidopsis thaliana (Mouse-ear cress) protein is Probable E3 ubiquitin-protein ligase ARI10 (ARI10).